The primary structure comprises 337 residues: MSIARRTTLSKFLIEQQRETNNLPADLRLLIEVVARACKAISYNVSKGALGDALGTAGSENVQGEVQKKLDILSNEILLDANEWGGNLAAMASEEMETFFPIPANYPRGEYLLVFDPLDGSSNIDVNVSIGTIFSVLRCPDGKQATEESFLQPGTEQVAAGYAVYGPQTVFVLTTGNGVNCFTLDREVGSWVLTQSNMQIPADTREYAINASNARHWYDPVKRYVDELNAGKDGPRGDNFNMRWIASMVADVHRILNRGGIFMYPADKRTPDRPGKLRLMYEANPMSFIVEQAGGAATTGTQRIMEVQPTGLHQRVPVFLGSKNEVERVTGYHDEAK.

Mg(2+)-binding residues include E94, D116, L118, and D119. Substrate contacts are provided by residues 119–122 (DGSS), N210, and K276. E282 serves as a coordination point for Mg(2+).

This sequence belongs to the FBPase class 1 family. As to quaternary structure, homotetramer. It depends on Mg(2+) as a cofactor.

The protein resides in the cytoplasm. It carries out the reaction beta-D-fructose 1,6-bisphosphate + H2O = beta-D-fructose 6-phosphate + phosphate. It participates in carbohydrate biosynthesis; gluconeogenesis. The sequence is that of Fructose-1,6-bisphosphatase class 1 from Burkholderia orbicola (strain MC0-3).